Consider the following 406-residue polypeptide: MASGVRQELAQLMNSSGSHKDLAGKYRQILEKALQFTDAEQLEALKAFVEAMVNENVSLVISRQLLTDFCAHLPNLPDDIAKVVCHFTLEKIQPRVISFEEQVASIRQHLATIYEKQEDWRNAAQVLVGIPLETGQKQYNVDYKLDTYLKIARLYLEDDDPVQAEAYINRASLLQNESTNEQLQIHYKVCYARVLDYRRKFIEAAQRYNELSYKSIVHETERLEALKHALHCTILASAGQQRSRMLATLFKDERCQQLAAYGILEKMYLDRIIRGNQLQEFAAMLMPHQKATTADGSSILDRAVIEHNLLSASKLYNNITFEELGALLEIPPAKAEKIASQMITEGRMNGFIDQIDGIVHFETREPLPTWDKQIQSLCFQVNNLLEKISQTAPEWTAQAIEAQMSQ.

A PCI domain is found at 197 to 366 (YRRKFIEAAQ…GIVHFETREP (170 aa)).

This sequence belongs to the CSN4 family. Component of the CSN complex, probably composed of cops1, cops2, cops3, cops4, cops5, cops6, cops7, cops8 and cops9.

It is found in the cytoplasm. Its subcellular location is the nucleus. The protein localises to the cytoplasmic vesicle. It localises to the secretory vesicle. The protein resides in the synaptic vesicle. In terms of biological role, component of the COP9 signalosome complex (CSN), a complex involved in various cellular and developmental processes. The CSN complex is an essential regulator of the ubiquitin (Ubl) conjugation pathway by mediating the deneddylation of the cullin subunits of E3 ligase complexes, leading to modify the Ubl ligase activity. This is COP9 signalosome complex subunit 4 (cops4) from Danio rerio (Zebrafish).